We begin with the raw amino-acid sequence, 166 residues long: Peptidyl-prolyl cis-trans isomerase-like 1 (166 aa).

Residues 10–164 (QPPNVYLETS…DDVKILKAYP (155 aa)) enclose the PPIase cyclophilin-type domain. Residues 54 to 65 (HRIIKDFMIQGG), 70 to 71 (TG), 99 to 104 (AMANAG), 109 to 113 (GSQFF), Thr-119, and Lys-125 each bind cyclosporin A. A Phosphoserine modification is found at Ser-149.

Belongs to the cyclophilin-type PPIase family. PPIL1 subfamily. Identified in the spliceosome C complex. Interacts with SNW1/SKIP. Interacts with CDC40/PRP17; this interaction leads to CDC40 isomerization. Interacts with RBM22.

It is found in the nucleus. The enzyme catalyses [protein]-peptidylproline (omega=180) = [protein]-peptidylproline (omega=0). Its activity is regulated as follows. Inhibited by Cyclosporin A. Involved in pre-mRNA splicing as component of the spliceosome. PPIases accelerate the folding of proteins. It catalyzes the cis-trans isomerization of proline imidic peptide bonds in oligopeptides. Catalyzes prolyl peptide bond isomerization in CDC40/PRP17. Plays an important role in embryonic brain development; this function is independent of its isomerase activity. The protein is Peptidyl-prolyl cis-trans isomerase-like 1 (Ppil1) of Mus musculus (Mouse).